A 337-amino-acid chain; its full sequence is tRNA N6-adenosine threonylcarbamoyltransferase (337 aa).

Residues histidine 111 and histidine 115 each contribute to the Fe cation site. Substrate-binding positions include 134-138 (LVSGG), aspartate 167, glycine 180, and asparagine 272. Fe cation is bound at residue aspartate 300.

Belongs to the KAE1 / TsaD family. Fe(2+) is required as a cofactor.

It is found in the cytoplasm. It carries out the reaction L-threonylcarbamoyladenylate + adenosine(37) in tRNA = N(6)-L-threonylcarbamoyladenosine(37) in tRNA + AMP + H(+). Required for the formation of a threonylcarbamoyl group on adenosine at position 37 (t(6)A37) in tRNAs that read codons beginning with adenine. Is involved in the transfer of the threonylcarbamoyl moiety of threonylcarbamoyl-AMP (TC-AMP) to the N6 group of A37, together with TsaE and TsaB. TsaD likely plays a direct catalytic role in this reaction. The sequence is that of tRNA N6-adenosine threonylcarbamoyltransferase from Aeromonas hydrophila subsp. hydrophila (strain ATCC 7966 / DSM 30187 / BCRC 13018 / CCUG 14551 / JCM 1027 / KCTC 2358 / NCIMB 9240 / NCTC 8049).